The primary structure comprises 354 residues: Hyaluronan and proteoglycan link protein 1 (354 aa).

Residues 1 to 15 constitute a propeptide that is removed on maturation; the sequence is MKSLLLLVLISFCWA. Asn-21 and Asn-56 each carry an N-linked (GlcNAc...) asparagine glycan. Positions 38–152 constitute an Ig-like V-type domain; it reads PRLLVEAEQA…EGLEDDTAVV (115 aa). 5 cysteine pairs are disulfide-bonded: Cys-61–Cys-139, Cys-181–Cys-252, Cys-205–Cys-226, Cys-279–Cys-349, and Cys-304–Cys-325. 2 consecutive Link domains span residues 159–254 and 259–351; these read VVFP…FCFT and GRFY…YCFR.

The protein belongs to the HAPLN family.

It is found in the secreted. The protein localises to the extracellular space. Its subcellular location is the extracellular matrix. In terms of biological role, stabilizes the aggregates of proteoglycan monomers with hyaluronic acid in the extracellular cartilage matrix. The polypeptide is Hyaluronan and proteoglycan link protein 1 (HAPLN1) (Bos taurus (Bovine)).